The chain runs to 578 residues: MALLCSALSNSTHPSFRSHIAGANSENLWHLSAHPAQKSKRRCNLTLSSRAAARISSALESGKLKPWQIPKRDWFPPEFTFGAASAAYQIEGAWNEGGKGPSSWDNFCHNYPERIMDGSNWDVAANSYYMYKEDVRMLKEIGMDSYRFSISWPRILPEGTLEGGINHEGIQYYNDLLDCLIENGIKPYITLFHWDTPQALADKYNDFLDRRIVKDYTDYATVCFEHFGDKVKNWITFNEPHSFCGLAYGTGLHAPGLCSPGMDCAIPQGDALRQPYIVGHNLLLAHAETVDVYKKFYKGDDGQIGMVMDVMAYEPYGNNFVDQQAQERSIDFHIGWFLEPMVRGDYPFSMRSLVGDRLPFFTKSEQEKLVSSYDFVGINYYTARFSEHIDISPEIIPKLNTDDAYSTPEFNDSNGIPIGPDLGMYWILSYPKGLKDILLLMKEKYGNPPIYITENGTADMDGWGNPPMTDPLDDPLRIEYLQQHMTAIKEAIDLGADVRGHFTWSLIDNFEWSMGYLSRFGIVYIDRNDGFKRIMKKSAKWLKEFNGATKEVNNKILGASSCCSGELMWFLVQNPYGK.

The N-terminal 57 residues, 1–57, are a transit peptide targeting the chloroplast; that stretch reads MALLCSALSNSTHPSFRSHIAGANSENLWHLSAHPAQKSKRRCNLTLSSRAAARISS. A beta-D-glucoside-binding positions include Q89, H193, and 238 to 239; that span reads NE. The active-site Proton donor is E239. Cysteines 258 and 264 form a disulfide. A beta-D-glucoside is bound by residues Y381, E454, W504, 511–512, and F520; that span reads EW. The active-site Nucleophile is the E454.

The protein belongs to the glycosyl hydrolase 1 family. As to quaternary structure, heteromultimer with P60A in a 1:1 stoichiometry. Aggregates to form the fibrillar stromacentre.

The protein localises to the plastid. Its subcellular location is the chloroplast stroma. The enzyme catalyses avenacoside B + H2O = 26-desgluco-avenacoside B + D-glucose. Beta-glucosidase acting as a preformed defense system. Hydrolyzes the bisdesmosides avenacosides A and B to 26-desgluco-avenacosides exhibiting fungicidal activity. Can use beta-fucoside &gt; beta-glucoside &gt; beta-galactoside &gt; beta-xyloside as substrates, but not alpha-glycosides, beta-thioglucosides and disaccharides. This chain is Avenacosidase 2 (P60B), found in Avena sativa (Oat).